The chain runs to 137 residues: Large ribosomal subunit protein uL16 (137 aa).

It belongs to the universal ribosomal protein uL16 family. As to quaternary structure, part of the 50S ribosomal subunit.

Functionally, binds 23S rRNA and is also seen to make contacts with the A and possibly P site tRNAs. This Thioalkalivibrio sulfidiphilus (strain HL-EbGR7) protein is Large ribosomal subunit protein uL16.